The chain runs to 40 residues: Natriuretic peptide PtNP-a (40 aa).

A disulfide bond links C9 and C25. Polar residues predominate over residues 17-34 (ISNTSGMGCRNPIQNRPK). The tract at residues 17 to 40 (ISNTSGMGCRNPIQNRPKSTPGGS) is disordered.

The protein belongs to the natriuretic peptide family. Expressed by the venom gland.

It localises to the secreted. Snake venom natriuretic peptide that targets NPR1 and possibly NPR2. Exhibits hypotensive and vasodepressor activities. Recombinant PtNP-a demonstrates a dose-dependent stimulation of cGMP production via the natriuretic peptide receptor 1 (NPR1) (EC(50)=563 nM) in Madine Darby Canine Kidney (MDCK) cells. It also inhibits the angiotensin converting enzyme (ACE). The protein is Natriuretic peptide PtNP-a of Pseudonaja textilis (Eastern brown snake).